The chain runs to 329 residues: Replication factor C small subunit 1 (329 aa).

Residue 44 to 51 coordinates ATP; the sequence is GPPGTGKT.

Belongs to the activator 1 small subunits family. RfcS subfamily. In terms of assembly, heteromultimer composed of small subunits (RfcS) and large subunits (RfcL).

In terms of biological role, part of the RFC clamp loader complex which loads the PCNA sliding clamp onto DNA. In Pyrobaculum aerophilum (strain ATCC 51768 / DSM 7523 / JCM 9630 / CIP 104966 / NBRC 100827 / IM2), this protein is Replication factor C small subunit 1.